Here is a 229-residue protein sequence, read N- to C-terminus: Peroxiredoxin-like 2A (229 aa).

Residues 14-112 (MWSIGVGAFG…DELGVPLYAV (99 aa)) form a thioredoxin fold region. Active-site redox-active residues include Cys-85 and Cys-88.

It belongs to the peroxiredoxin-like PRXL2 family. PRXL2A subfamily. In terms of tissue distribution, expressed by the principal cells of the epididymis. Detected in the head region of epididymal sperm (at protein level). Expressed in bone marrow.

Its subcellular location is the cytoplasm. The protein localises to the secreted. Its function is as follows. Involved in redox regulation of the cell. Acts as an antioxidant. Inhibits TNFSF11-induced NFKB1 and JUN activation and osteoclast differentiation. May affect bone resorption and help to maintain bone mass. Acts as a negative regulator of macrophage-mediated inflammation by inhibiting macrophage production of inflammatory cytokines, probably through suppression of the MAPK signaling pathway. This chain is Peroxiredoxin-like 2A, found in Rattus norvegicus (Rat).